Reading from the N-terminus, the 358-residue chain is Protein RecA (358 aa).

76–83 (GPESSGKT) is a binding site for ATP.

The protein belongs to the RecA family.

It is found in the cytoplasm. In terms of biological role, can catalyze the hydrolysis of ATP in the presence of single-stranded DNA, the ATP-dependent uptake of single-stranded DNA by duplex DNA, and the ATP-dependent hybridization of homologous single-stranded DNAs. It interacts with LexA causing its activation and leading to its autocatalytic cleavage. The protein is Protein RecA of Rhodospirillum centenum (strain ATCC 51521 / SW).